The chain runs to 140 residues: Organic hydroperoxide resistance protein-like (140 aa).

This sequence belongs to the OsmC/Ohr family.

In Mycoplasma pneumoniae (strain ATCC 29342 / M129 / Subtype 1) (Mycoplasmoides pneumoniae), this protein is Organic hydroperoxide resistance protein-like.